Consider the following 204-residue polypeptide: Inner membrane protein YagU (204 aa).

Topologically, residues 1–14 (MNIFEQTPPNRRRY) are periplasmic. The helical transmembrane segment at 15 to 35 (GLAAFIGLIAGVVSAFVKWGA) threads the bilayer. Over 36–100 (EVPLPPRSPV…VYTFAGHVFN (65 aa)) the chain is Cytoplasmic. Residues 101-121 (WVGVTHIIFSIVFAVGYCVVA) traverse the membrane as a helical segment. The Periplasmic portion of the chain corresponds to 122-132 (EVFPKIKLWQG). A helical membrane pass occupies residues 133-153 (LLAGALAQLFVHMISFPLMGL). The Cytoplasmic portion of the chain corresponds to 154–204 (TPPLFDLPWYENVSEIFGHLVWFWSIEIIRRDLRNRITHEPDPEIPLGSNR).

In terms of assembly, homodimer.

The protein localises to the cell inner membrane. The polypeptide is Inner membrane protein YagU (yagU) (Escherichia coli (strain K12)).